The chain runs to 297 residues: HTH-type transcriptional regulator ArgP (297 aa).

Residues 4-60 (PDYRTLQALDAVIRERGFERAAQKLCITQSAVSQRIKQLENMFGQPLLVRTVPPRPT) enclose the HTH lysR-type domain. The H-T-H motif DNA-binding region spans 21 to 40 (FERAAQKLCITQSAVSQRIK).

Belongs to the LysR transcriptional regulatory family. As to quaternary structure, homodimer.

Its function is as follows. Controls the transcription of genes involved in arginine and lysine metabolism. The sequence is that of HTH-type transcriptional regulator ArgP from Escherichia fergusonii (strain ATCC 35469 / DSM 13698 / CCUG 18766 / IAM 14443 / JCM 21226 / LMG 7866 / NBRC 102419 / NCTC 12128 / CDC 0568-73).